A 196-amino-acid polypeptide reads, in one-letter code: Zinc finger C2H2 protein ECU03_0940 (196 aa).

C2H2-type zinc fingers lie at residues 130 to 155 (YACEIEGCNKKYTSSFGLKYHMKEGH) and 166 to 191 (YVCPFSGCDKKYKNNNGLKYHIKHYH).

This Encephalitozoon cuniculi (strain GB-M1) (Microsporidian parasite) protein is Zinc finger C2H2 protein ECU03_0940.